The chain runs to 320 residues: MQTKNTFSWIKKEIIRSISVSLMIYIIARTSISNAYPIFAQQGYENPREATGRIVCANCHLANKPVDIEVPQAVLPDTVFEAVVRIPYDMQVKQVLANGKRGGLNVGAVLILPEGFELAPPDRISPEMKEKIGNLSFQSYRPNKKNILVIGPVSGQKYSEVTFPILSPDPATNKDVHFLKYPIYVGGNRGRGQIYPDGSKSNNTVYNATAAGVVSKIIRKEKGGYEITISDASDERQVVDIIPPGPELLVSEGESIKLDQPLTSNPNVGGFGQGDAEIVLQDPFRVQGLLFFLASVILAQIFLVLKKKQFEKVQLSEMNF.

A signal peptide spans methionine 1–alanine 35. Heme contacts are provided by tyrosine 36, cysteine 56, cysteine 59, and histidine 60. A helical membrane pass occupies residues valine 286–lysine 306.

Belongs to the cytochrome f family. The 4 large subunits of the cytochrome b6-f complex are cytochrome b6, subunit IV (17 kDa polypeptide, petD), cytochrome f and the Rieske protein, while the 4 small subunits are PetG, PetL, PetM and PetN. The complex functions as a dimer. Heme is required as a cofactor.

The protein resides in the plastid. It localises to the chloroplast thylakoid membrane. In terms of biological role, component of the cytochrome b6-f complex, which mediates electron transfer between photosystem II (PSII) and photosystem I (PSI), cyclic electron flow around PSI, and state transitions. This is Cytochrome f from Eucalyptus globulus subsp. globulus (Tasmanian blue gum).